A 400-amino-acid chain; its full sequence is Enoyl-[acyl-carrier-protein] reductase [NADH] 1 (400 aa).

NAD(+) contacts are provided by residues 48-53 (GASSGY), 74-75 (FE), 111-112 (DA), and 139-140 (LA). A substrate-binding site is contributed by Y225. Y235 (proton donor) is an active-site residue. NAD(+)-binding positions include K244 and 273-275 (VVT).

It belongs to the TER reductase family. In terms of assembly, monomer.

The enzyme catalyses a 2,3-saturated acyl-[ACP] + NAD(+) = a (2E)-enoyl-[ACP] + NADH + H(+). It functions in the pathway lipid metabolism; fatty acid biosynthesis. In terms of biological role, involved in the final reduction of the elongation cycle of fatty acid synthesis (FAS II). Catalyzes the reduction of a carbon-carbon double bond in an enoyl moiety that is covalently linked to an acyl carrier protein (ACP). This is Enoyl-[acyl-carrier-protein] reductase [NADH] 1 from Vibrio parahaemolyticus serotype O3:K6 (strain RIMD 2210633).